We begin with the raw amino-acid sequence, 855 residues long: MGEISQETVEKYLEANPQFAKEYFNRKLQVEVPSGGAQAPASASFPGRTLAEEAALYLELLEVLLEEAGSVELAAHRALQRLAQLLQADRCSMFLCRARNGTPEVASKLLDVTPTSKFEDNLVVPDREAVFPLDVGIVGWVAHTKKTFNVPDVKKNSHFSDFMDKQTGYVTRNLLATPIVMGKEVLAVFMAVNKVDASEFSKQDEEVFSKYLSFVSIILKLHHTNYLYNIESRRSQILMWSANKVFEELTDVERQFHKALYTVRTYLNCERYSIGLLDMTKEKEFYDEWPVKLGEVEPYKGPKTPDGREVIFYKIIDYILHGKEEIKVIPTPPMDHWTLISGLPTYVAENGFICNMLNAPADEYFTFQKGPVDETGWVIKNVLSLPIVNKKEDIVGVATFYNRKDGKPFDEYDEHIAETLTQFLGWSLLNTDTYEKMNKLENRKDIAQEMLMNHTKATPDEIKSILKFKEKLNIDVIEDCEEKQLVTILKEDLPDPRTADLYEFRFRHLPITEHELIKCGLRLFFEINVVEKFKVPVEVLTRWMYTVRKGYRAVTYHNWRHGFNVGQTMFTLLMTGRLKKYYTDLEAFAMLAAAFCHDIDHRGTNNLYQMKSTSPLARLHGSSILERHHLEYSKTLLQDESLNIFQNLNKRQYETVIHLFEVAIIATDLALYFKKRTMFQKIVDACEKMETEEEAIKYVTIDPTKKEIIMAMMMTACDLSAITKPWEVQSQVALLVANEFWEQGDLERTVLQQQPIPMMDRNKKDELPKLQVGFIDFVCTFVYKEFSRFHKEITPMLNGLQNNRVEWKSLADEYDEKMKVIEEMKKQEEGNTTEKAVEDSGGGGDDKKSKTCLML.

GAF domains follow at residues 70-219 and 251-428; these read SVEL…SIIL and DVER…GWSL. 3',5'-cyclic GMP is bound by residues serine 92, serine 116, 164 to 167, and threonine 171; that span reads DKQT. The 334-residue stretch at 481–814 folds into the PDEase domain; sequence EEKQLVTILK…VEWKSLADEY (334 aa). The active-site Proton donor is the histidine 557. 4 residues coordinate a divalent metal cation: histidine 561, histidine 597, aspartate 598, and aspartate 718. The segment at 823–855 is disordered; sequence EMKKQEEGNTTEKAVEDSGGGGDDKKSKTCLML. Cysteine 852 carries the post-translational modification Cysteine methyl ester. Cysteine 852 carries S-geranylgeranyl cysteine lipidation. The propeptide at 853 to 855 is removed in mature form; it reads LML.

The protein belongs to the cyclic nucleotide phosphodiesterase family. As to quaternary structure, composed of two alpha' subunits that are associated with 3 smaller proteins of 11, 13, and 15 kDa. A divalent metal cation is required as a cofactor.

The protein localises to the cell membrane. It catalyses the reaction 3',5'-cyclic GMP + H2O = GMP + H(+). Its function is as follows. As cone-specific cGMP phosphodiesterase, it plays an essential role in light detection and cone phototransduction by rapidly decreasing intracellular levels of cGMP. This is Cone cGMP-specific 3',5'-cyclic phosphodiesterase subunit alpha' (PDE6C) from Bos taurus (Bovine).